The following is a 363-amino-acid chain: 3-dehydroquinate synthase (363 aa).

Residues 75 to 80 (DAEEGK), 109 to 113 (GAVTD), 133 to 134 (TS), lysine 146, lysine 155, and 173 to 176 (TLDT) contribute to the NAD(+) site. Zn(2+) is bound by residues glutamate 188, histidine 251, and histidine 267.

The protein belongs to the sugar phosphate cyclases superfamily. Dehydroquinate synthase family. Requires Co(2+) as cofactor. The cofactor is Zn(2+). NAD(+) serves as cofactor.

It is found in the cytoplasm. It catalyses the reaction 7-phospho-2-dehydro-3-deoxy-D-arabino-heptonate = 3-dehydroquinate + phosphate. It functions in the pathway metabolic intermediate biosynthesis; chorismate biosynthesis; chorismate from D-erythrose 4-phosphate and phosphoenolpyruvate: step 2/7. Catalyzes the conversion of 3-deoxy-D-arabino-heptulosonate 7-phosphate (DAHP) to dehydroquinate (DHQ). The polypeptide is 3-dehydroquinate synthase (Pseudarthrobacter chlorophenolicus (strain ATCC 700700 / DSM 12829 / CIP 107037 / JCM 12360 / KCTC 9906 / NCIMB 13794 / A6) (Arthrobacter chlorophenolicus)).